A 344-amino-acid polypeptide reads, in one-letter code: Protein RecA (344 aa).

ATP is bound at residue 65–72; the sequence is GPESSGKT.

The protein belongs to the RecA family.

The protein localises to the cytoplasm. In terms of biological role, can catalyze the hydrolysis of ATP in the presence of single-stranded DNA, the ATP-dependent uptake of single-stranded DNA by duplex DNA, and the ATP-dependent hybridization of homologous single-stranded DNAs. It interacts with LexA causing its activation and leading to its autocatalytic cleavage. The sequence is that of Protein RecA from Campylobacter lari.